The primary structure comprises 232 residues: Flagellar L-ring protein (232 aa).

The first 15 residues, 1–15 (MKKVLFYVLPFAFFG), serve as a signal peptide directing secretion. Cys-16 carries the N-palmitoyl cysteine lipid modification. Residue Cys-16 is the site of S-diacylglycerol cysteine attachment.

It belongs to the FlgH family. In terms of assembly, the basal body constitutes a major portion of the flagellar organelle and consists of four rings (L,P,S, and M) mounted on a central rod.

Its subcellular location is the cell outer membrane. The protein localises to the bacterial flagellum basal body. Assembles around the rod to form the L-ring and probably protects the motor/basal body from shearing forces during rotation. The polypeptide is Flagellar L-ring protein (Campylobacter jejuni subsp. jejuni serotype O:23/36 (strain 81-176)).